The primary structure comprises 1337 residues: ATP-dependent helicase/nuclease subunit A (1337 aa).

The UvrD-like helicase ATP-binding domain occupies 3–484 (FTPSKEQEPA…LDLSDNYRSR (482 aa)). 24–31 (ASAGSGKT) is an ATP binding site. Positions 522–867 (ADRDQASPAT…NVMTIHKSKG (346 aa)) constitute a UvrD-like helicase C-terminal domain.

Belongs to the helicase family. AddA subfamily. In terms of assembly, heterodimer of AddA and AddB/RexB. Requires Mg(2+) as cofactor.

It carries out the reaction Couples ATP hydrolysis with the unwinding of duplex DNA by translocating in the 3'-5' direction.. The catalysed reaction is ATP + H2O = ADP + phosphate + H(+). Its function is as follows. The heterodimer acts as both an ATP-dependent DNA helicase and an ATP-dependent, dual-direction single-stranded exonuclease. Recognizes the chi site generating a DNA molecule suitable for the initiation of homologous recombination. The AddA nuclease domain is required for chi fragment generation; this subunit has the helicase and 3' -&gt; 5' nuclease activities. This is ATP-dependent helicase/nuclease subunit A from Limosilactobacillus fermentum (strain NBRC 3956 / LMG 18251) (Lactobacillus fermentum).